Consider the following 283-residue polypeptide: Putative UTP--glucose-1-phosphate uridylyltransferase (283 aa).

The protein belongs to the UDPGP type 2 family.

It catalyses the reaction alpha-D-glucose 1-phosphate + UTP + H(+) = UDP-alpha-D-glucose + diphosphate. The polypeptide is Putative UTP--glucose-1-phosphate uridylyltransferase (Methanocaldococcus jannaschii (strain ATCC 43067 / DSM 2661 / JAL-1 / JCM 10045 / NBRC 100440) (Methanococcus jannaschii)).